Consider the following 192-residue polypeptide: MGSCECPALLLLLSLLLLPLGLPVLGAPPRLICDSRVLERYILGAREAENVTMGCAEGCSFSENITVPDTKVNFYTWKRMDVGQQAVEVWQGLALLSEAILRGQALLANSSQPSETLQLHVDKAVSSLRSLTSLLRALGAQKEATSLPEATSAAPLRTFTVDTLCKLFRIYSNFLRGKLTLYTGEACRRGDR.

The N-terminal stretch at 1–26 (MGSCECPALLLLLSLLLLPLGLPVLG) is a signal peptide. 2 cysteine pairs are disulfide-bonded: C33–C187 and C55–C59. Residue N50 is glycosylated (N-linked (GlcNAc...) asparagine). Residues N64 and N109 are each glycosylated (N-linked (GlcNAc...) asparagine).

It belongs to the EPO/TPO family. In terms of tissue distribution, produced by kidney or liver of adult mammals and by liver of fetal or neonatal mammals.

It is found in the secreted. Its function is as follows. Hormone involved in the regulation of erythrocyte proliferation and differentiation and the maintenance of a physiological level of circulating erythrocyte mass. Binds to EPOR leading to EPOR dimerization and JAK2 activation thereby activating specific downstream effectors, including STAT1 and STAT3. This Felis catus (Cat) protein is Erythropoietin (EPO).